A 653-amino-acid polypeptide reads, in one-letter code: Mediator of RNA polymerase II transcription subunit 17 (653 aa).

The disordered stretch occupies residues Ser246–Ser271.

The protein belongs to the Mediator complex subunit 17 family. As to quaternary structure, component of the Mediator complex.

It localises to the nucleus. Component of the Mediator complex, a coactivator involved in the regulated transcription of nearly all RNA polymerase II-dependent genes. Mediator functions as a bridge to convey information from gene-specific regulatory proteins to the basal RNA polymerase II transcription machinery. The Mediator complex, having a compact conformation in its free form, is recruited to promoters by direct interactions with regulatory proteins and serves for the assembly of a functional preinitiation complex with RNA polymerase II and the general transcription factors. The chain is Mediator of RNA polymerase II transcription subunit 17 (MED17) from Arabidopsis thaliana (Mouse-ear cress).